A 209-amino-acid polypeptide reads, in one-letter code: Uracil phosphoribosyltransferase (209 aa).

5-phospho-alpha-D-ribose 1-diphosphate-binding positions include Arg79, Arg104, and 131 to 139; that span reads DPMLATGGS. Uracil contacts are provided by residues Ile194 and 199–201; that span reads GDA. Asp200 contacts 5-phospho-alpha-D-ribose 1-diphosphate.

Belongs to the UPRTase family. The cofactor is Mg(2+).

It catalyses the reaction UMP + diphosphate = 5-phospho-alpha-D-ribose 1-diphosphate + uracil. It participates in pyrimidine metabolism; UMP biosynthesis via salvage pathway; UMP from uracil: step 1/1. Allosterically activated by GTP. Its function is as follows. Catalyzes the conversion of uracil and 5-phospho-alpha-D-ribose 1-diphosphate (PRPP) to UMP and diphosphate. The chain is Uracil phosphoribosyltransferase from Bacillus velezensis (strain DSM 23117 / BGSC 10A6 / LMG 26770 / FZB42) (Bacillus amyloliquefaciens subsp. plantarum).